The chain runs to 596 residues: MKHIRNFSIIAHIDHGKSTLSDRLIQECGGLTDREMAAQVLDSMDIERERGITIKAQSVTLDYLANDGETYQLNFIDTPGHVDFSYEVSRSLAACEGALLVVDAGQGVEAQTLANCYTALEMDMDVVPVLNKIDLPQADPDRVAEEIEDIVGIEATDAVRCSAKTGVGIKDVLEVIVAQIPPPEGDPEGPLQALIIDSWFDSYLGVVSLVRIKNGVLKKGDKFKVMSTGQNYNADRVGIFTPKQTDTTELKTGEVGFVIAGIKEIHGAPVGDTLTHSKHGAEKALAGFKKVKPQVYAGLFPISTDDYENFRDALNKLSLNDASLFFEPETSSALGFGFRIGFLGLLHMEIIQERLEREYNLELITTAPTVVYEIVQTNGETIYVDNPSDLPAINNIAEMREPIVETNILVPKEYLGNVITLCIEKRGVQTNLVYHGNQVALTYELPMAEVVMDFFDRLKSTSRGYASLEYNFIRFEPADMVRLDILINGDRVDALAMIIHKGLIRSKGLALVNKMKELIPRQMFDIAVQAAVGSQIIARSSIKAMRKDVTAKCYGGDVSRKKKLLNKQKEGKKRMKQVGNVEVPQEAFLAVLKLND.

In terms of domain architecture, tr-type G spans 2–184 (KHIRNFSIIA…VIVAQIPPPE (183 aa)). Residues 14 to 19 (DHGKST) and 131 to 134 (NKID) contribute to the GTP site.

The protein belongs to the TRAFAC class translation factor GTPase superfamily. Classic translation factor GTPase family. LepA subfamily.

It localises to the cell inner membrane. It catalyses the reaction GTP + H2O = GDP + phosphate + H(+). In terms of biological role, required for accurate and efficient protein synthesis under certain stress conditions. May act as a fidelity factor of the translation reaction, by catalyzing a one-codon backward translocation of tRNAs on improperly translocated ribosomes. Back-translocation proceeds from a post-translocation (POST) complex to a pre-translocation (PRE) complex, thus giving elongation factor G a second chance to translocate the tRNAs correctly. Binds to ribosomes in a GTP-dependent manner. This is Elongation factor 4 from Shewanella halifaxensis (strain HAW-EB4).